The sequence spans 187 residues: Protein ECM23 (187 aa).

Disordered stretches follow at residues 106–127 and 167–187; these read GKKSLAGYRPKSRKKQTILPNG and KKIRSQQSSDDGTKNFIFKNK. The GATA-type zinc-finger motif lies at 126–180; sequence NGQPKECATCGDTWTSQWRSGPNGNVELCSRCGIAYRKKMEKKIRSQQSSDDGTK.

In terms of biological role, involved in morphogenesis. May be involved in cell wall organization and biogenesis. The sequence is that of Protein ECM23 (ECM23) from Saccharomyces cerevisiae (strain ATCC 204508 / S288c) (Baker's yeast).